Here is a 563-residue protein sequence, read N- to C-terminus: Grainyhead-like protein 1 homolog (563 aa).

Positions Asn-194–Ile-428 constitute a Grh/CP2 DB domain. Interaction with DNA stretches follow at residues Thr-326–Lys-335 and Arg-372–Arg-375. Positions Glu-377–Tyr-405 are disordered.

It belongs to the grh/CP2 family. Grainyhead subfamily.

The protein resides in the nucleus. In terms of biological role, probable transcription factor. Binds a motif with the core sequence 5'-C[ACT][TG]G-3' in regulatory elements of target genes. Many putative target genes show oscillating expression levels, perhaps as a result of rhythmic variation in accumulation of grh-1. Plays a role in proper cuticle formation and/or barrier function and is required repetitively during development, for successful completion of each molt. Involved in modulating lifespan. Plays a role in defense response to bacteria. May act upstream of the p38 MAP kinase / pmk-1 pathway. May act downstream of the insulin/IGF-1 receptor signaling (IIS) pathway. The polypeptide is Grainyhead-like protein 1 homolog (Caenorhabditis elegans).